Consider the following 328-residue polypeptide: D-cysteine desulfhydrase (328 aa).

Lysine 51 is subject to N6-(pyridoxal phosphate)lysine.

It belongs to the ACC deaminase/D-cysteine desulfhydrase family. In terms of assembly, homodimer. Pyridoxal 5'-phosphate is required as a cofactor.

The catalysed reaction is D-cysteine + H2O = hydrogen sulfide + pyruvate + NH4(+) + H(+). In terms of biological role, catalyzes the alpha,beta-elimination reaction of D-cysteine and of several D-cysteine derivatives. It could be a defense mechanism against D-cysteine. This is D-cysteine desulfhydrase from Escherichia coli O6:H1 (strain CFT073 / ATCC 700928 / UPEC).